Reading from the N-terminus, the 361-residue chain is Histidinol-phosphate aminotransferase (361 aa).

Lys224 carries the post-translational modification N6-(pyridoxal phosphate)lysine.

It belongs to the class-II pyridoxal-phosphate-dependent aminotransferase family. Histidinol-phosphate aminotransferase subfamily. As to quaternary structure, homodimer. It depends on pyridoxal 5'-phosphate as a cofactor.

It carries out the reaction L-histidinol phosphate + 2-oxoglutarate = 3-(imidazol-4-yl)-2-oxopropyl phosphate + L-glutamate. Its pathway is amino-acid biosynthesis; L-histidine biosynthesis; L-histidine from 5-phospho-alpha-D-ribose 1-diphosphate: step 7/9. In Limosilactobacillus fermentum (strain NBRC 3956 / LMG 18251) (Lactobacillus fermentum), this protein is Histidinol-phosphate aminotransferase.